The primary structure comprises 1001 residues: X-linked retinitis pigmentosa GTPase regulator (1001 aa).

RCC1 repeat units follow at residues 54 to 105, 106 to 158, 159 to 208, 209 to 261, 262 to 313, and 314 to 367; these read NKLY…STDT, GGVY…LTED, GKLF…VTMD, GELY…LTEK, VVYA…MTEL, and GLLY…FATP. The disordered stretch occupies residues 404-428; sequence SLSARLRRRERERPPCSASMVGTLP. Ser-518 carries the phosphoserine modification. Composition is skewed to basic and acidic residues over residues 631-641 and 659-671; these read KKIRESEENSK and EDNK…RRSS. 4 disordered regions span residues 631 to 738, 794 to 869, 902 to 925, and 962 to 1001; these read KKIR…WYDR, NLEF…EGSE, PKGH…DPTS, and GDQI…CTIL. 2 stretches are compositionally biased toward acidic residues: residues 679–691 and 717–731; these read SETE…DSYM and EKDE…EVET. Composition is skewed to basic and acidic residues over residues 794–818, 847–857, and 902–911; these read NLEF…EKEA, EERKEGEKEIV, and PKGHMYDRVK. Polar residues predominate over residues 976–1001; the sequence is QNHMGQNLQDSTTPNMEGKSKSCTIL. Cys-998 is subject to Cysteine methyl ester. Cys-998 carries the S-geranylgeranyl cysteine lipid modification. Positions 999-1001 are cleaved as a propeptide — removed in mature form; the sequence is TIL.

Interacts with SPATA7. Interacts with PDE6D. Interacts with RPGRIP1 and RPGRIP1L; PDE6D, RPGRIP1 and RPGRIP1L may compete for the same binding sites. Interacts with NPM1. Interacts with PDE6D. Isoform 5 interacts (via N-terminus) with SMC1A and SMC3. Isoform 5 interacts with CEP290. Interacts with WHRN. Interacts with RAB37 and RAB8A (in GDP-bound forms); functions as GEF for RAB37 and RAB8A. Prenylated. As to expression, expressed in the retina (at protein level). Located mainly in the connecting cilia between the outer segment and inner segment and also observed in the outer plexiform layer, inner plexiform layer, and ganglion cell layer of the retinas. Isoform 1: Expressed in the retina (at protein level). Isoform 5: Expressed in the retina (at protein level). Expressed in the brain. Expressed in the testis (at protein level). Expressed in kidney (at protein level).

It is found in the golgi apparatus. The protein localises to the cytoplasm. Its subcellular location is the cytoskeleton. It localises to the microtubule organizing center. The protein resides in the centrosome. It is found in the cell projection. The protein localises to the cilium. Its subcellular location is the cilium basal body. It localises to the cilium axoneme. The protein resides in the flagellum axoneme. Functionally, acts as a guanine-nucleotide releasing factor (GEF) for RAB8A and RAB37 by promoting the conversion of inactive RAB-GDP to the active form RAB-GTP. GEF activity towards RAB8A may facilitate ciliary trafficking by modulating ciliary intracellular localization of RAB8A. GEF activity towards RAB37 maintains autophagic homeostasis and retinal function. Involved in photoreceptor integrity. May control cilia formation by regulating actin stress filaments and cell contractility. May be involved in microtubule organization and regulation of transport in primary cilia. In terms of biological role, isoform 5 may play a critical role in spermatogenesis and in intraflagellar transport processes. This Mus musculus (Mouse) protein is X-linked retinitis pigmentosa GTPase regulator.